Here is a 299-residue protein sequence, read N- to C-terminus: Protoheme IX farnesyltransferase (299 aa).

The next 8 helical transmembrane spans lie at 25–45 (IVSLIVFTAIVGMFLSVPDLA), 51–71 (LFGTLGIGLGAASAAAINHLI), 97–117 (ALAFAITLGLSSMIILYFLVN), 119–139 (LTAWLTLASMIGYGIIYTAFL), 147–167 (IVLGGASGAMPPVLGWAAVTG), 173–193 (AFLLFLIIFVWTPPHFWALAL), 225–245 (FLLFAVSLLPFVSHMSGLLYL), and 275–295 (FGYSIVYLAALFAFLLVDHYL).

Belongs to the UbiA prenyltransferase family. Protoheme IX farnesyltransferase subfamily.

Its subcellular location is the cell inner membrane. It catalyses the reaction heme b + (2E,6E)-farnesyl diphosphate + H2O = Fe(II)-heme o + diphosphate. Its pathway is porphyrin-containing compound metabolism; heme O biosynthesis; heme O from protoheme: step 1/1. Converts heme B (protoheme IX) to heme O by substitution of the vinyl group on carbon 2 of heme B porphyrin ring with a hydroxyethyl farnesyl side group. This chain is Protoheme IX farnesyltransferase, found in Nitrosococcus oceani (strain ATCC 19707 / BCRC 17464 / JCM 30415 / NCIMB 11848 / C-107).